Consider the following 120-residue polypeptide: Putative pterin-4-alpha-carbinolamine dehydratase (120 aa).

The protein belongs to the pterin-4-alpha-carbinolamine dehydratase family.

The catalysed reaction is (4aS,6R)-4a-hydroxy-L-erythro-5,6,7,8-tetrahydrobiopterin = (6R)-L-erythro-6,7-dihydrobiopterin + H2O. The sequence is that of Putative pterin-4-alpha-carbinolamine dehydratase from Saccharomyces cerevisiae (strain ATCC 204508 / S288c) (Baker's yeast).